A 228-amino-acid polypeptide reads, in one-letter code: Peptide deformylase (228 aa).

Disordered stretches follow at residues 1–28 (MSQD…EGAV) and 116–138 (GVPK…EPDR). Composition is skewed to polar residues over residues 8-18 (TGCNTHSNTHS) and 123-133 (NKQQANNSTSC). Fe cation contacts are provided by Cys141 and His183. Glu184 is a catalytic residue. Fe cation is bound at residue His187.

It belongs to the polypeptide deformylase family. Requires Fe(2+) as cofactor.

It carries out the reaction N-terminal N-formyl-L-methionyl-[peptide] + H2O = N-terminal L-methionyl-[peptide] + formate. Its function is as follows. Removes the formyl group from the N-terminal Met of newly synthesized proteins. Requires at least a dipeptide for an efficient rate of reaction. N-terminal L-methionine is a prerequisite for activity but the enzyme has broad specificity at other positions. This chain is Peptide deformylase, found in Tropheryma whipplei (strain Twist) (Whipple's bacillus).